A 741-amino-acid chain; its full sequence is D-(-)-3-hydroxybutyrate oligomer hydrolase (741 aa).

Residues 1–23 (MKTIQGKSPGRWYSRGMLLAAMA) form the signal peptide. The segment at 45-68 (NGNAGGNGNNNGNNNGNTVSNTKP) is disordered. Serine 338 serves as the catalytic Charge relay system.

Belongs to the D-(-)-3-hydroxybutyrate oligomer hydrolase family.

Its subcellular location is the secreted. It catalyses the reaction (3R)-hydroxybutanoate dimer + H2O = 2 (R)-3-hydroxybutanoate + H(+). It participates in lipid metabolism; butanoate metabolism. Its function is as follows. Participates in the degradation of poly-3-hydroxybutyrate (PHB). It works downstream of poly(3-hydroxybutyrate) depolymerase, hydrolyzing D(-)-3-hydroxybutyrate oligomers of various length (3HB-oligomers) into 3HB-monomers. In Ralstonia pickettii (Burkholderia pickettii), this protein is D-(-)-3-hydroxybutyrate oligomer hydrolase.